A 176-amino-acid chain; its full sequence is T cell receptor beta constant 1 (176 aa).

The 110-residue stretch at 8–117 folds into the Ig-like C1-type domain; that stretch reads PEVAVFEPSE…WTQDRAKPVT (110 aa). Cys30 and Cys95 are disulfide-bonded. N-linked (GlcNAc...) asparagine glycosylation is present at Asn69. The connecting peptide stretch occupies residues 130–144; the sequence is CGFTSVSYQQGVLSA. The chain crosses the membrane as a helical span at residues 150–170; sequence ILLGKATLYAVLVSALVLMAM. At 171-176 the chain is on the cytoplasmic side; it reads VKRKDF.

As to quaternary structure, alpha-beta TR is a heterodimer composed of an alpha and beta chain; disulfide-linked. The alpha-beta TR is associated with the transmembrane signaling CD3 coreceptor proteins to form the TR-CD3 (TcR or TCR). The assembly of alpha-beta TR heterodimers with CD3 occurs in the endoplasmic reticulum where a single alpha-beta TR heterodimer associates with one CD3D-CD3E heterodimer, one CD3G-CD3E heterodimer and one CD247 homodimer forming a stable octameric structure. CD3D-CD3E and CD3G-CD3E heterodimers preferentially associate with TR alpha and TR beta chains, respectively. The association of the CD247 homodimer is the last step of TcR assembly in the endoplasmic reticulum and is required for transport to the cell surface.

It is found in the cell membrane. Functionally, constant region of T cell receptor (TR) beta chain. Alpha-beta T cell receptors are antigen specific receptors which are essential to the immune response and are present on the cell surface of T lymphocytes. Recognize peptide-major histocompatibility (MH) (pMH) complexes that are displayed by antigen presenting cells (APC), a prerequisite for efficient T cell adaptive immunity against pathogens. Binding of alpha-beta TR to pMH complex initiates TR-CD3 clustering on the cell surface and intracellular activation of LCK that phosphorylates the ITAM motifs of CD3G, CD3D, CD3E and CD247 enabling the recruitment of ZAP70. In turn, ZAP70 phosphorylates LAT, which recruits numerous signaling molecules to form the LAT signalosome. The LAT signalosome propagates signal branching to three major signaling pathways, the calcium, the mitogen-activated protein kinase (MAPK) kinase and the nuclear factor NF-kappa-B (NF-kB) pathways, leading to the mobilization of transcription factors that are critical for gene expression and essential for T cell growth and differentiation. The T cell repertoire is generated in the thymus, by V-(D)-J rearrangement. This repertoire is then shaped by intrathymic selection events to generate a peripheral T cell pool of self-MH restricted, non-autoaggressive T cells. Post-thymic interaction of alpha-beta TR with the pMH complexes shapes TR structural and functional avidity. The polypeptide is T cell receptor beta constant 1 (Homo sapiens (Human)).